The following is a 459-amino-acid chain: Bifunctional protein GlmU (459 aa).

The interval 1-229 is pyrophosphorylase; it reads MSNFAIILAA…FDESLGVNDR (229 aa). UDP-N-acetyl-alpha-D-glucosamine is bound by residues 8-11, lysine 22, glutamine 72, and 77-78; these read LAAG and GT. Aspartate 102 lines the Mg(2+) pocket. UDP-N-acetyl-alpha-D-glucosamine is bound by residues glycine 139, glutamate 154, asparagine 169, and asparagine 227. Asparagine 227 provides a ligand contact to Mg(2+). The segment at 230 to 250 is linker; sequence VALATAESVMRRRINHKHMVN. Residues 251 to 459 form an N-acetyltransferase region; sequence GVSFVNPEAT…TRLPHHPKNQ (209 aa). UDP-N-acetyl-alpha-D-glucosamine-binding residues include arginine 332 and lysine 350. The active-site Proton acceptor is histidine 362. The UDP-N-acetyl-alpha-D-glucosamine site is built by tyrosine 365 and asparagine 376. Acetyl-CoA-binding positions include alanine 379, 385-386, serine 404, alanine 422, and arginine 439; that span reads NY.

In the N-terminal section; belongs to the N-acetylglucosamine-1-phosphate uridyltransferase family. This sequence in the C-terminal section; belongs to the transferase hexapeptide repeat family. As to quaternary structure, homotrimer. Mg(2+) serves as cofactor.

Its subcellular location is the cytoplasm. The catalysed reaction is alpha-D-glucosamine 1-phosphate + acetyl-CoA = N-acetyl-alpha-D-glucosamine 1-phosphate + CoA + H(+). The enzyme catalyses N-acetyl-alpha-D-glucosamine 1-phosphate + UTP + H(+) = UDP-N-acetyl-alpha-D-glucosamine + diphosphate. It participates in nucleotide-sugar biosynthesis; UDP-N-acetyl-alpha-D-glucosamine biosynthesis; N-acetyl-alpha-D-glucosamine 1-phosphate from alpha-D-glucosamine 6-phosphate (route II): step 2/2. The protein operates within nucleotide-sugar biosynthesis; UDP-N-acetyl-alpha-D-glucosamine biosynthesis; UDP-N-acetyl-alpha-D-glucosamine from N-acetyl-alpha-D-glucosamine 1-phosphate: step 1/1. It functions in the pathway bacterial outer membrane biogenesis; LPS lipid A biosynthesis. Its function is as follows. Catalyzes the last two sequential reactions in the de novo biosynthetic pathway for UDP-N-acetylglucosamine (UDP-GlcNAc). The C-terminal domain catalyzes the transfer of acetyl group from acetyl coenzyme A to glucosamine-1-phosphate (GlcN-1-P) to produce N-acetylglucosamine-1-phosphate (GlcNAc-1-P), which is converted into UDP-GlcNAc by the transfer of uridine 5-monophosphate (from uridine 5-triphosphate), a reaction catalyzed by the N-terminal domain. This chain is Bifunctional protein GlmU, found in Streptococcus pneumoniae (strain JJA).